An 89-amino-acid polypeptide reads, in one-letter code: Putative acyl-CoA-binding protein (89 aa).

Positions 3–88 constitute an ACB domain; that stretch reads VEEQFKTSAE…VKELVEKNGL (86 aa). An acyl-CoA-binding positions include Lys15, 30–34, Lys52, Lys56, and Tyr75; that span reads YSLYK.

It belongs to the ACBP family.

Binds medium- and long-chain acyl-CoA esters with very high affinity and may function as an intracellular carrier of acyl-CoA esters. This Hypsibius exemplaris (Freshwater tardigrade) protein is Putative acyl-CoA-binding protein.